The sequence spans 575 residues: MSDQFDAKAFLKTVTSQPGVYRMYDAGGTVIYVGKAKDLKKRLSSYFRSNLASRKTEALVAQIQQIDVTVTHTETEALLLEHNYIKLYQPRYNVLLRDDKSYPFIFLSGDTHPRLAMHRGAKHAKGEYFGPFPNGYAVRETLALLQKIFPIRQCENSVYRNRSRPCLQYQIGRCLGPCVEGLVSEEEYAQQVEYVRLFLSGKDDQVLTQLISRMETASQNLEFEEAARIRDQIQAVRRVTEKQFVSNTGDDLDVIGVAFDAGMACVHVLFIRQGKVLGSRSYFPKVPGGTELSEVVETFVGQFYLQGSQMRTLPGEILLDFNLSDKTLLADSLSELAGRKINVQTKPRGDRARYLKLARTNAATALTSKLSQQSTVHQRLTALASVLKLPEVKRMECFDISHTMGEQTVASCVVFDANGPLRAEYRRYNITGITPGDDYAAMNQVLRRRYGKAIDDSKIPDVILIDGGKGQLAQAKNVFAELDVSWDKNHPLLLGVAKGADRKAGLETLFFEPEGEGFSLPPDSPALHVIQHIRDESHDHAIGGHRKKRAKVKNTSSLETIEGVGPKRRQNVVEN.

Positions 16-94 (SQPGVYRMYD…IKLYQPRYNV (79 aa)) constitute a GIY-YIG domain. In terms of domain architecture, UVR spans 204 to 239 (DQVLTQLISRMETASQNLEFEEAARIRDQIQAVRRV).

Belongs to the UvrC family. In terms of assembly, interacts with UvrB in an incision complex.

The protein localises to the cytoplasm. The UvrABC repair system catalyzes the recognition and processing of DNA lesions. UvrC both incises the 5' and 3' sides of the lesion. The N-terminal half is responsible for the 3' incision and the C-terminal half is responsible for the 5' incision. This chain is UvrABC system protein C, found in Shigella dysenteriae serotype 1 (strain Sd197).